The chain runs to 446 residues: Maltoporin (446 aa).

A signal peptide spans 1–25 (MMITLRKLPLAVAVAAGVMSAQAMA).

Belongs to the porin LamB (TC 1.B.3) family. In terms of assembly, homotrimer formed of three 18-stranded antiparallel beta-barrels, containing three independent channels.

It is found in the cell outer membrane. The catalysed reaction is beta-maltose(in) = beta-maltose(out). In terms of biological role, involved in the transport of maltose and maltodextrins. This Escherichia coli O7:K1 (strain IAI39 / ExPEC) protein is Maltoporin.